Consider the following 305-residue polypeptide: MLKQRTIKSIVKTVGIGLHSGRKIELTLRPAAPGTGIVFSRIDLPTPVDIPASAMSIGDTRLASVLQKDGARVSTVEHLMSACAGLGIDNLYVDVTAEEIPIMDGSAATFVFLIQSAGIEEQNAPKRFIKVTKPVEIRDGDKFARLDPYFGFKLKFSIDFRHPAVDKTGQELEVDFANTSYVREIARARTFGFAHEAEMLRELGLARGGSMDNAIVLDEYRILNNDGLRYDDEFVKHKMLDAIGDLYVVGHPLLASYTAYKSGHGLNNALLRELLAHEDAYEIVTFDDPQAAPKGFAFDAQTAFA.

Residues H78, H237, and D241 each contribute to the Zn(2+) site. H264 functions as the Proton donor in the catalytic mechanism.

It belongs to the LpxC family. Requires Zn(2+) as cofactor.

The catalysed reaction is a UDP-3-O-[(3R)-3-hydroxyacyl]-N-acetyl-alpha-D-glucosamine + H2O = a UDP-3-O-[(3R)-3-hydroxyacyl]-alpha-D-glucosamine + acetate. It functions in the pathway glycolipid biosynthesis; lipid IV(A) biosynthesis; lipid IV(A) from (3R)-3-hydroxytetradecanoyl-[acyl-carrier-protein] and UDP-N-acetyl-alpha-D-glucosamine: step 2/6. Catalyzes the hydrolysis of UDP-3-O-myristoyl-N-acetylglucosamine to form UDP-3-O-myristoylglucosamine and acetate, the committed step in lipid A biosynthesis. The sequence is that of UDP-3-O-acyl-N-acetylglucosamine deacetylase from Burkholderia ambifaria (strain MC40-6).